Reading from the N-terminus, the 460-residue chain is GTPase Der (460 aa).

2 EngA-type G domains span residues 9 to 171 (KTIA…SLNQ) and 199 to 370 (IQVG…ECFS). GTP-binding positions include 15–22 (GQPNVGKS), 62–66 (DTGGM), 123–126 (NKID), 205–212 (GRVNVGKS), 252–256 (DTAGI), and 316–319 (NKWD). The region spanning 371–455 (RRIPTSLLNS…PLILNAKDKK (85 aa)) is the KH-like domain.

The protein belongs to the TRAFAC class TrmE-Era-EngA-EngB-Septin-like GTPase superfamily. EngA (Der) GTPase family. Associates with the 50S ribosomal subunit.

Its function is as follows. GTPase that plays an essential role in the late steps of ribosome biogenesis. The polypeptide is GTPase Der (Helicobacter pylori (strain G27)).